The primary structure comprises 493 residues: Transcript termination protein OPG145 (493 aa).

Residues 100–256 (MIKLKRPLYI…NSIINIAKLS (157 aa)) form the Helicase ATP-binding domain. ATP is bound at residue 113–120 (LACGFGKT). The DESH box signature appears at 206–209 (DESH).

This sequence belongs to the helicase family. Poxviruses subfamily. Interacts with OPG087. Might be part of a transcription complex composed at least of OPG087, OPG110, and OPG145.

It localises to the virion. In terms of biological role, DNA helicase which seems to act as a postreplicative transcription termination factor. Involved in ATP-dependent release of nascent RNA. Forms a stable complex with single-stranded DNA, and to a lesser extent RNA. The protein is Transcript termination protein OPG145 (OPG145) of Variola virus (isolate Human/India/Ind3/1967) (VARV).